A 186-amino-acid polypeptide reads, in one-letter code: dCTP deaminase (186 aa).

Lys107–Arg112 contacts dCTP. Glu133 functions as the Proton donor/acceptor in the catalytic mechanism. 3 residues coordinate dCTP: Gln152, Tyr166, and Gln176.

This sequence belongs to the dCTP deaminase family. As to quaternary structure, homotrimer.

It catalyses the reaction dCTP + H2O + H(+) = dUTP + NH4(+). It functions in the pathway pyrimidine metabolism; dUMP biosynthesis; dUMP from dCTP (dUTP route): step 1/2. Catalyzes the deamination of dCTP to dUTP. In Campylobacter jejuni (strain RM1221), this protein is dCTP deaminase.